The chain runs to 213 residues: Glutathione S-transferase APIC (213 aa).

The 82-residue stretch at 1-82 (MAIKVHGSPM…YIAHVYADNG (82 aa)) folds into the GST N-terminal domain. Glutathione is bound by residues Ser11, 12–13 (TA), 40–41 (HK), 53–54 (QV), and 66–67 (ES). Residues 89–213 (DPKKMPIMSV…WVKGLEKLQK (125 aa)) form the GST C-terminal domain.

Belongs to the GST superfamily. Phi family.

The enzyme catalyses RX + glutathione = an S-substituted glutathione + a halide anion + H(+). Functionally, conjugation of reduced glutathione to a wide number of exogenous and endogenous hydrophobic electrophiles. This is Glutathione S-transferase APIC from Nicotiana tabacum (Common tobacco).